The primary structure comprises 115 residues: Large ribosomal subunit protein bL19 (115 aa).

Belongs to the bacterial ribosomal protein bL19 family.

Functionally, this protein is located at the 30S-50S ribosomal subunit interface and may play a role in the structure and function of the aminoacyl-tRNA binding site. In Kosmotoga olearia (strain ATCC BAA-1733 / DSM 21960 / TBF 19.5.1), this protein is Large ribosomal subunit protein bL19.